A 202-amino-acid polypeptide reads, in one-letter code: Small ribosomal subunit protein uS2 (202 aa).

The protein belongs to the universal ribosomal protein uS2 family. In terms of assembly, part of the 30S ribosomal subunit.

This chain is Small ribosomal subunit protein uS2, found in Pyrococcus furiosus (strain ATCC 43587 / DSM 3638 / JCM 8422 / Vc1).